Reading from the N-terminus, the 512-residue chain is Cytochrome P450 monooxygenase adrA (512 aa).

A helical transmembrane segment spans residues F12 to A32. 3 N-linked (GlcNAc...) asparagine glycosylation sites follow: N86, N149, and N210. Heme is bound at residue C453.

Belongs to the cytochrome P450 family. Heme is required as a cofactor.

Its subcellular location is the membrane. It functions in the pathway secondary metabolite biosynthesis; terpenoid biosynthesis. Cytochrome P450 monooxygenase; part of the gene cluster that mediates the biosynthesis of andrastins, meroterpenoid compounds that exhibit inhibitory activity against ras farnesyltransferase, suggesting that they could be promising leads for antitumor agents. The first step of the pathway is the synthesis of 3,5-dimethylorsellinic acid (DMOA) by the polyketide synthase adrD via condensation of one acetyl-CoA starter unit with 3 malonyl-CoA units and 2 methylations. DMAO is then converted to farnesyl-DMAO by the prenyltransferase adrG. The methyltransferase adrK catalyzes the methylation of the carboxyl group of farnesyl-DMAO to farnesyl-DMAO methyl ester which is further converted to epoxyfarnesyl-DMAO methyl ester by the FAD-dependent monooxygenase adrH. The terpene cyclase adrI then catalyzes the carbon skeletal rearrangement to generate the andrastin E, the first compound in the pathway having the andrastin scaffold, with the tetracyclic ring system. The post-cyclization tailoring enzymes adrF, adrE, adrJ, and adrA, are involved in the conversion of andrastin E into andrastin A. The short chain dehydrogenase adrF is responsible for the oxidation of the C-3 a hydroxyl group of andrastin E to yield the corresponding ketone, andrastin D. The ketoreductase adrE stereoselectively reduces the carbonyl moiety to reverse the stereochemistry of the C-3 position to yield andrastin F. The acetyltransferase adrJ is the acetyltransferase that attaches the acetyl group to the C-3 hydroxyl group of andrastin F to yield andrastin C. Finally, the cytochrome P450 monooxygenase adrA catalyzes two sequential oxidation reactions of the C-23 methyl group, to generate the corresponding alcohol andrastin B, and aldehyde andrastin A. The chain is Cytochrome P450 monooxygenase adrA from Penicillium rubens (strain ATCC 28089 / DSM 1075 / NRRL 1951 / Wisconsin 54-1255) (Penicillium chrysogenum).